A 192-amino-acid chain; its full sequence is Elongation factor P (192 aa).

The tract at residues 133-157 (EVTETTPGVKGDTAQGGDKPATLES) is disordered.

This sequence belongs to the elongation factor P family.

It localises to the cytoplasm. It participates in protein biosynthesis; polypeptide chain elongation. Its function is as follows. Involved in peptide bond synthesis. Stimulates efficient translation and peptide-bond synthesis on native or reconstituted 70S ribosomes in vitro. Probably functions indirectly by altering the affinity of the ribosome for aminoacyl-tRNA, thus increasing their reactivity as acceptors for peptidyl transferase. This chain is Elongation factor P, found in Salinibacter ruber (strain DSM 13855 / M31).